We begin with the raw amino-acid sequence, 362 residues long: Histidinol-phosphate aminotransferase (362 aa).

An N6-(pyridoxal phosphate)lysine modification is found at Lys-220.

The protein belongs to the class-II pyridoxal-phosphate-dependent aminotransferase family. Histidinol-phosphate aminotransferase subfamily. In terms of assembly, homodimer. Pyridoxal 5'-phosphate serves as cofactor.

The enzyme catalyses L-histidinol phosphate + 2-oxoglutarate = 3-(imidazol-4-yl)-2-oxopropyl phosphate + L-glutamate. Its pathway is amino-acid biosynthesis; L-histidine biosynthesis; L-histidine from 5-phospho-alpha-D-ribose 1-diphosphate: step 7/9. This Rhodospirillum centenum (strain ATCC 51521 / SW) protein is Histidinol-phosphate aminotransferase.